We begin with the raw amino-acid sequence, 66 residues long: MAKGGNVRVTITLECTSCTQDSVNKKSPGISRYTTRKNRRNTPLRLELKKFCPYCYKHTIHGEIKK.

The protein belongs to the bacterial ribosomal protein bL33 family.

It is found in the plastid. The protein localises to the chloroplast. The protein is Large ribosomal subunit protein bL33c of Cryptomeria japonica (Japanese cedar).